The primary structure comprises 467 residues: Glutamate--tRNA ligase (467 aa).

Residues 9 to 19 (PSPTGYLHIGG) carry the 'HIGH' region motif. The 'KMSKS' region motif lies at 237–241 (KLSKR). Lys-240 lines the ATP pocket.

It belongs to the class-I aminoacyl-tRNA synthetase family. Glutamate--tRNA ligase type 1 subfamily. Monomer.

The protein resides in the cytoplasm. The enzyme catalyses tRNA(Glu) + L-glutamate + ATP = L-glutamyl-tRNA(Glu) + AMP + diphosphate. In terms of biological role, catalyzes the attachment of glutamate to tRNA(Glu) in a two-step reaction: glutamate is first activated by ATP to form Glu-AMP and then transferred to the acceptor end of tRNA(Glu). This Xanthomonas campestris pv. campestris (strain B100) protein is Glutamate--tRNA ligase.